A 300-amino-acid polypeptide reads, in one-letter code: GTPase Era (300 aa).

The 176-residue stretch at 7-182 (YCGFIAIVGR…LRKGVHHFPE (176 aa)) folds into the Era-type G domain. Residues 15 to 22 (GRPNVGKS) form a G1 region. 15–22 (GRPNVGKS) provides a ligand contact to GTP. The tract at residues 41-45 (QTTRH) is G2. A G3 region spans residues 62–65 (DTPG). GTP is bound by residues 62–66 (DTPGL) and 124–127 (NKVD). Residues 124-127 (NKVD) are G4. A G5 region spans residues 154 to 156 (ISA). One can recognise a KH type-2 domain in the interval 206-283 (TGEELPYSVT…HLELWVKVKS (78 aa)).

This sequence belongs to the TRAFAC class TrmE-Era-EngA-EngB-Septin-like GTPase superfamily. Era GTPase family. As to quaternary structure, monomer.

The protein resides in the cytoplasm. It is found in the cell inner membrane. In terms of biological role, an essential GTPase that binds both GDP and GTP, with rapid nucleotide exchange. Plays a role in 16S rRNA processing and 30S ribosomal subunit biogenesis and possibly also in cell cycle regulation and energy metabolism. This Histophilus somni (strain 129Pt) (Haemophilus somnus) protein is GTPase Era.